The sequence spans 875 residues: Protein translocase subunit SecA (875 aa).

Residues glutamine 87, 105-109 (GEGKT), and aspartate 512 contribute to the ATP site. Cysteine 860, cysteine 862, cysteine 871, and histidine 872 together coordinate Zn(2+).

This sequence belongs to the SecA family. Monomer and homodimer. Part of the essential Sec protein translocation apparatus which comprises SecA, SecYEG and auxiliary proteins SecDF-YajC and YidC. It depends on Zn(2+) as a cofactor.

The protein resides in the cell inner membrane. Its subcellular location is the cytoplasm. The catalysed reaction is ATP + H2O + cellular proteinSide 1 = ADP + phosphate + cellular proteinSide 2.. Functionally, part of the Sec protein translocase complex. Interacts with the SecYEG preprotein conducting channel. Has a central role in coupling the hydrolysis of ATP to the transfer of proteins into and across the cell membrane, serving both as a receptor for the preprotein-SecB complex and as an ATP-driven molecular motor driving the stepwise translocation of polypeptide chains across the membrane. This is Protein translocase subunit SecA from Buchnera aphidicola subsp. Acyrthosiphon pisum (strain APS) (Acyrthosiphon pisum symbiotic bacterium).